We begin with the raw amino-acid sequence, 846 residues long: Disrupted in schizophrenia 1 homolog (846 aa).

Disordered regions lie at residues 1–53 (MQGA…IGFL), 127–147 (HSGV…GDSG), 231–257 (EAEP…GEPR), 277–312 (TRSN…QDGG), and 409–436 (LHGA…AQDS). The tract at residues 1-288 (MQGAGSRGAW…SNRQPECGMV (288 aa)) is interaction with MAP1A. 2 stretches are compositionally biased toward basic and acidic residues: residues 133-143 (GNDRRQSERLT) and 248-257 (GSDRPHGEPR). Over residues 277 to 300 (TRSNRQPECGMVSSSDAGFSSQDA) the composition is skewed to polar residues. The interval 289-686 (SSSDAGFSSQ…LERVWKADLE (398 aa)) is interaction with TRAF3IP1. The segment at 429–587 (RRTTAQDSLP…LLEAKMLALS (159 aa)) is required for localization to punctate cytoplasmic foci. The tract at residues 435 to 846 (DSLPGLAVTR…STAGAQEAED (412 aa)) is necessary and sufficient for interaction with PCNT and localization at the centrosome. Residues 440–489 (LAVTRRDWLMREKEQLQKEIEALRARVSVLEAKEQRLSQELEDQEMLLRW) adopt a coiled-coil conformation. The interaction with ATF4 and ATF5 stretch occupies residues 588–846 (GSCFSTAKEL…STAGAQEAED (259 aa)). The segment at 721–846 (TAALAVPRTP…STAGAQEAED (126 aa)) is interaction with NDEL1 and PAFAH1B1. Residues 721–846 (TAALAVPRTP…STAGAQEAED (126 aa)) form an interaction with PAFAH1B1 region. An interaction with NDEL1 region spans residues 795–828 (GHDEALFQSLQGELQMVKETLQTMFLQLQPAKEA).

In terms of assembly, interacts with NDEL1. Interacts with CCDC88A (via C-terminus); the interaction is direct. Interacts with GSK3B. Interacts with tubulin alpha, ACTN2, ANKHD1, ATF4, ATF5, CEP63, EIF3S3, MAP1A, NDEL1, PAFAH1B1, RANBP9, SPTBN4, SYNE1 and TRAF3IP1. Interaction with microtubules may be mediated in part by TRAF3IP1. Interacts (via C-terminal) with PCNT. Interacts with CHCHD6. Interacts with CCDC141. Interacts with FBXW7, the substrate-recognition component of a SCF (SKP1-CUL1-F-box protein) E3 ubiquitin-protein ligase complex; the interaction targets DISC1 for proteasomal degradation. Interacts with ZNF365. Interacts with ATF4; inhibiting ATF4 transcription factor activity by disrupting ATF4 dimerization and DNA-binding. Interacts with PDE4B. In terms of processing, ubiquitinated. Ubiquitination with 'Lys-48'-linked polyubiquitin chains leads to its proteasomal degradation. Expressed in brain, heart, kidney, liver and thymus. Within the brain expression is high in the cerebral cortex, hippocampus and olfactory bulb and is also seen at lower levels in the cerebellum (at protein level).

Its subcellular location is the cytoplasm. The protein localises to the cytoskeleton. It is found in the mitochondrion. The protein resides in the microtubule organizing center. It localises to the centrosome. Its subcellular location is the postsynaptic density. In terms of biological role, involved in the regulation of multiple aspects of embryonic and adult neurogenesis. Required for neural progenitor proliferation in the ventrical/subventrical zone during embryonic brain development and in the adult dentate gyrus of the hippocampus. Participates in the Wnt-mediated neural progenitor proliferation as a positive regulator by modulating GSK3B activity and CTNNB1 abundance. Plays a role as a modulator of the AKT-mTOR signaling pathway controlling the tempo of the process of newborn neurons integration during adult neurogenesis, including neuron positioning, dendritic development and synapse formation. Inhibits the activation of AKT-mTOR signaling upon interaction with CCDC88A. Regulates the migration of early-born granule cell precursors toward the dentate gyrus during the hippocampal development. Inhibits ATF4 transcription factor activity in neurons by disrupting ATF4 dimerization and DNA-binding. Plays a role, together with PCNT, in the microtubule network formation. The chain is Disrupted in schizophrenia 1 homolog from Rattus norvegicus (Rat).